A 158-amino-acid chain; its full sequence is Cyclic pyranopterin monophosphate synthase (158 aa).

Substrate is bound by residues 76–78 (LCH) and 114–115 (ME). Asp129 is a catalytic residue.

This sequence belongs to the MoaC family. Homohexamer; trimer of dimers.

It carries out the reaction (8S)-3',8-cyclo-7,8-dihydroguanosine 5'-triphosphate = cyclic pyranopterin phosphate + diphosphate. Its pathway is cofactor biosynthesis; molybdopterin biosynthesis. Its function is as follows. Catalyzes the conversion of (8S)-3',8-cyclo-7,8-dihydroguanosine 5'-triphosphate to cyclic pyranopterin monophosphate (cPMP). The polypeptide is Cyclic pyranopterin monophosphate synthase (Shewanella sediminis (strain HAW-EB3)).